The following is a 483-amino-acid chain: Glutamyl-tRNA(Gln) amidotransferase subunit A (483 aa).

Catalysis depends on charge relay system residues K76 and S151. The active-site Acyl-ester intermediate is the S175.

The protein belongs to the amidase family. GatA subfamily. As to quaternary structure, heterotrimer of A, B and C subunits.

It carries out the reaction L-glutamyl-tRNA(Gln) + L-glutamine + ATP + H2O = L-glutaminyl-tRNA(Gln) + L-glutamate + ADP + phosphate + H(+). Functionally, allows the formation of correctly charged Gln-tRNA(Gln) through the transamidation of misacylated Glu-tRNA(Gln) in organisms which lack glutaminyl-tRNA synthetase. The reaction takes place in the presence of glutamine and ATP through an activated gamma-phospho-Glu-tRNA(Gln). The chain is Glutamyl-tRNA(Gln) amidotransferase subunit A from Pseudomonas syringae pv. tomato (strain ATCC BAA-871 / DC3000).